The chain runs to 91 residues: Small ribosomal subunit protein uS19 (91 aa).

It belongs to the universal ribosomal protein uS19 family.

Protein S19 forms a complex with S13 that binds strongly to the 16S ribosomal RNA. The polypeptide is Small ribosomal subunit protein uS19 (Exiguobacterium sp. (strain ATCC BAA-1283 / AT1b)).